The sequence spans 493 residues: Leucine-rich repeat-containing protein 14 (493 aa).

The stretch at 111 to 146 (KHALRVLDMTGLLDDGVEQDPGTMSMWDCTAAVART) is one LRR 1; degenerate repeat. One copy of the LRR 2; degenerate repeat lies at 194–218 (RLCCRDLRAEDLPMRNTVALLQLLD). The stretch at 219–246 (AGCLRRVDLRFNNLGLRGLSVIIPHVAR) is one LRR 3; degenerate repeat. Residues 247–282 (FQHLASLRLHYVHGDSRQPSVDGEDNFRYFLAQMGR) form an LRR 4; degenerate repeat. LRR repeat units lie at residues 283-307 (FTCLRELSMGSSLLSGRLDQLLSTL), 308-339 (QSPLESLELAFCALLPEDLRFLARSPHAAHLK), 340-360 (KLDLSGNDLSGSQLAPFQGLL), 364-391 (AATLLHLELTECQLADTQLLATLPILTQ), and 392-416 (CASLRYLGLYGNPLSMAGLKELLRD).

It belongs to the PRAME family. LRRC14 subfamily. In terms of assembly, interacts with IKBKB; disrupts IKBKB-IKBKG interaction preventing I-kappa-B-kinase (IKK) core complex formation and leading to a decrease of IKBKB phosphorylation and NF-kappaB activation. Interacts with CHUK.

Its subcellular location is the cytoplasm. Its function is as follows. Negatively regulates Toll-like receptor-mediated NF-kappa-B signaling by disrupting IKK core complex formation through interaction with IKBKB. This chain is Leucine-rich repeat-containing protein 14, found in Homo sapiens (Human).